The primary structure comprises 422 residues: Lactoyl-CoA dehydratase subunit alpha (422 aa).

Belongs to the FldB/FldC dehydratase alpha/beta subunit family. As to quaternary structure, heterodimer of an alpha (LcdA) and a beta (LcdB) subunit. [4Fe-4S] cluster is required as a cofactor. FMN serves as cofactor. Requires riboflavin as cofactor. It depends on Mg(2+) as a cofactor.

It carries out the reaction (R)-lactoyl-CoA = acryloyl-CoA + H2O. The catalysed reaction is (2R)-hydroxybutanoyl-CoA = (2E)-butenoyl-CoA + H2O. Activated by the LcdC protein. Functionally, involved in the acrylate pathway for the conversion of D-lactic acid to propionic acid. Catalyzes the reversible dehydration of Lactoyl-CoA and 2-hydroxybutyroyl-CoA to acryloyl-CoA and crotonyl-CoA, respectively. The sequence is that of Lactoyl-CoA dehydratase subunit alpha (lcdA) from Anaerotignum propionicum (Clostridium propionicum).